Here is a 309-residue protein sequence, read N- to C-terminus: Sulfate adenylyltransferase subunit 2 (309 aa).

Belongs to the PAPS reductase family. CysD subfamily. Heterodimer composed of CysD, the smaller subunit, and CysN.

It carries out the reaction sulfate + ATP + H(+) = adenosine 5'-phosphosulfate + diphosphate. Its pathway is sulfur metabolism; hydrogen sulfide biosynthesis; sulfite from sulfate: step 1/3. Functionally, with CysN forms the ATP sulfurylase (ATPS) that catalyzes the adenylation of sulfate producing adenosine 5'-phosphosulfate (APS) and diphosphate, the first enzymatic step in sulfur assimilation pathway. APS synthesis involves the formation of a high-energy phosphoric-sulfuric acid anhydride bond driven by GTP hydrolysis by CysN coupled to ATP hydrolysis by CysD. This chain is Sulfate adenylyltransferase subunit 2, found in Mycolicibacterium vanbaalenii (strain DSM 7251 / JCM 13017 / BCRC 16820 / KCTC 9966 / NRRL B-24157 / PYR-1) (Mycobacterium vanbaalenii).